We begin with the raw amino-acid sequence, 430 residues long: Long-chain specific acyl-CoA dehydrogenase, mitochondrial (430 aa).

Residues 1–30 constitute a mitochondrion transit peptide; sequence MAARLLLRSLRVLSARSATLPPPSARCSHS. The residue at position 42 (lysine 42) is an N6-acetyllysine. Serine 54 and serine 55 each carry phosphoserine. Lysine 66 and lysine 81 each carry N6-acetyllysine; alternate. 2 positions are modified to N6-succinyllysine; alternate: lysine 66 and lysine 81. N6-acetyllysine occurs at positions 92 and 95. Lysine 165 is subject to N6-succinyllysine. 170 to 179 lines the FAD pocket; that stretch reads IAMTEPGAGS. Position 179 (serine 179) interacts with substrate. Phosphoserine is present on serine 191. 203 to 205 is a binding site for FAD; it reads FIT. 227 to 228 provides a ligand contact to substrate; it reads AH. Lysine 240 is subject to N6-succinyllysine. Lysine 254 and lysine 279 each carry N6-acetyllysine; alternate. N6-succinyllysine; alternate occurs at positions 254 and 279. Substrate-binding positions include tyrosine 282 and 289-292; that span reads PQER. Glutamate 291 functions as the Proton acceptor in the catalytic mechanism. Arginine 317 is a binding site for FAD. Residue lysine 318 is modified to N6-acetyllysine. Lysine 322 carries the post-translational modification N6-acetyllysine; alternate. At lysine 322 the chain carries N6-succinyllysine; alternate. Glutamine 328 contributes to the FAD binding site. Lysine 358 is modified (N6-acetyllysine). Phosphoserine is present on serine 362. 385–389 is a binding site for FAD; the sequence is QLHGG. 412–413 lines the substrate pocket; it reads GG. Position 414–416 (414–416) interacts with FAD; it reads TNE.

It belongs to the acyl-CoA dehydrogenase family. Homotetramer. FAD serves as cofactor. In terms of processing, acetylation at Lys-318 and Lys-322 in proximity of the cofactor-binding sites strongly reduces catalytic activity. These sites are deacetylated by SIRT3.

It localises to the mitochondrion matrix. It catalyses the reaction a long-chain 2,3-saturated fatty acyl-CoA + oxidized [electron-transfer flavoprotein] + H(+) = a long-chain (2E)-enoyl-CoA + reduced [electron-transfer flavoprotein]. The enzyme catalyses octanoyl-CoA + oxidized [electron-transfer flavoprotein] + H(+) = (2E)-octenoyl-CoA + reduced [electron-transfer flavoprotein]. It carries out the reaction decanoyl-CoA + oxidized [electron-transfer flavoprotein] + H(+) = (2E)-decenoyl-CoA + reduced [electron-transfer flavoprotein]. The catalysed reaction is dodecanoyl-CoA + oxidized [electron-transfer flavoprotein] + H(+) = (2E)-dodecenoyl-CoA + reduced [electron-transfer flavoprotein]. It catalyses the reaction tetradecanoyl-CoA + oxidized [electron-transfer flavoprotein] + H(+) = (2E)-tetradecenoyl-CoA + reduced [electron-transfer flavoprotein]. The enzyme catalyses oxidized [electron-transfer flavoprotein] + hexadecanoyl-CoA + H(+) = (2E)-hexadecenoyl-CoA + reduced [electron-transfer flavoprotein]. It carries out the reaction octadecanoyl-CoA + oxidized [electron-transfer flavoprotein] + H(+) = (2E)-octadecenoyl-CoA + reduced [electron-transfer flavoprotein]. The catalysed reaction is (5E)-tetradecenoyl-CoA + oxidized [electron-transfer flavoprotein] + H(+) = (2E,5E)-tetradecadienoyl-CoA + reduced [electron-transfer flavoprotein]. It catalyses the reaction (5Z)-tetradecenoyl-CoA + oxidized [electron-transfer flavoprotein] + H(+) = (2E,5Z)-tetradecadienoyl-CoA + reduced [electron-transfer flavoprotein]. The enzyme catalyses oxidized [electron-transfer flavoprotein] + (9Z)-octadecenoyl-CoA + H(+) = (2E,9Z)-octadecadienoyl-CoA + reduced [electron-transfer flavoprotein]. It carries out the reaction hexanoyl-CoA + oxidized [electron-transfer flavoprotein] + H(+) = (2E)-hexenoyl-CoA + reduced [electron-transfer flavoprotein]. The catalysed reaction is eicosanoyl-CoA + oxidized [electron-transfer flavoprotein] + H(+) = (2E)-eicosenoyl-CoA + reduced [electron-transfer flavoprotein]. It catalyses the reaction docosanoyl-CoA + oxidized [electron-transfer flavoprotein] + H(+) = (2E)-docosenoyl-CoA + reduced [electron-transfer flavoprotein]. The enzyme catalyses tetracosanoyl-CoA + oxidized [electron-transfer flavoprotein] + H(+) = (2E)-tetracosenoyl-CoA + reduced [electron-transfer flavoprotein]. It functions in the pathway lipid metabolism; mitochondrial fatty acid beta-oxidation. Inhibited by crotonyl-CoA, 2-octenoyl-CoA and 2-hexadecenoyl-CoA. In terms of biological role, long-chain specific acyl-CoA dehydrogenase is one of the acyl-CoA dehydrogenases that catalyze the first step of mitochondrial fatty acid beta-oxidation, an aerobic process breaking down fatty acids into acetyl-CoA and allowing the production of energy from fats. The first step of fatty acid beta-oxidation consists in the removal of one hydrogen from C-2 and C-3 of the straight-chain fatty acyl-CoA thioester, resulting in the formation of trans-2-enoyl-CoA. Among the different mitochondrial acyl-CoA dehydrogenases, long-chain specific acyl-CoA dehydrogenase can act on saturated and unsaturated acyl-CoAs with 6 to 24 carbons with a preference for 8 to 18 carbons long primary chains. The polypeptide is Long-chain specific acyl-CoA dehydrogenase, mitochondrial (Rattus norvegicus (Rat)).